We begin with the raw amino-acid sequence, 210 residues long: dTTP/UTP pyrophosphatase (210 aa).

Asp-80 serves as the catalytic Proton acceptor.

This sequence belongs to the Maf family. YhdE subfamily. A divalent metal cation is required as a cofactor.

The protein resides in the cytoplasm. It catalyses the reaction dTTP + H2O = dTMP + diphosphate + H(+). The enzyme catalyses UTP + H2O = UMP + diphosphate + H(+). In terms of biological role, nucleoside triphosphate pyrophosphatase that hydrolyzes dTTP and UTP. May have a dual role in cell division arrest and in preventing the incorporation of modified nucleotides into cellular nucleic acids. This Nitratidesulfovibrio vulgaris (strain ATCC 29579 / DSM 644 / CCUG 34227 / NCIMB 8303 / VKM B-1760 / Hildenborough) (Desulfovibrio vulgaris) protein is dTTP/UTP pyrophosphatase.